Consider the following 378-residue polypeptide: uncharacterized protein (378 aa).

The next 11 helical transmembrane spans lie at 12 to 34 (SLAFALYDTGETILGALVVSTFF), 44 to 66 (VKIYSLSYGISLLASFALAIFLG), 92 to 112 (SIALLYGTPYLALLSFLLMLI), 132 to 154 (GFASGLGVSFGYVGSAIALIFLA), 161 to 180 (EVYAVVGLIFLILAVPSIIT), 200 to 222 (TFLLFLLSLLTLTEVANTLIAMM), 235 to 257 (VEIYRIIGFSALGGVLGGIFWGV), 267 to 285 (VFPLGFFLWSFFFILLFFA), 290 to 312 (LIFVGLLAGFSLAHLWSTSRVYI), 327 to 349 (FLSLTERVASSFGLFLWSFFLFI), and 356 to 373 (LSALLMGTLPLIGFFIYL).

Its subcellular location is the cell membrane. This is an uncharacterized protein from Aquifex aeolicus (strain VF5).